We begin with the raw amino-acid sequence, 133 residues long: NADH dehydrogenase [ubiquinone] 1 alpha subcomplex subunit 6 (133 aa).

This sequence belongs to the complex I LYR family. In terms of assembly, complex I is composed of at least 49 different subunits.

It is found in the mitochondrion inner membrane. Its function is as follows. Accessory subunit of the mitochondrial membrane respiratory chain NADH dehydrogenase (Complex I), that is believed to be not involved in catalysis. Complex I functions in the transfer of electrons from NADH to the respiratory chain. The immediate electron acceptor for the enzyme is believed to be ubiquinone. This is NADH dehydrogenase [ubiquinone] 1 alpha subcomplex subunit 6 from Arabidopsis thaliana (Mouse-ear cress).